The following is a 440-amino-acid chain: Phosphatidylcholine-sterol acyltransferase (440 aa).

Residues methionine 1–serine 24 form the signal peptide. A glycan (N-linked (GlcNAc...) asparagine) is linked at asparagine 44. The cysteines at positions 74 and 98 are disulfide-linked. An N-linked (GlcNAc...) asparagine glycan is attached at asparagine 108. Serine 205 acts as the Nucleophile in catalysis. Asparagine 296 carries N-linked (GlcNAc...) asparagine glycosylation. Cysteine 337 and cysteine 380 are oxidised to a cystine. The active-site Charge relay system is the aspartate 369. A glycan (N-linked (GlcNAc...) asparagine) is linked at asparagine 397. Catalysis depends on histidine 401, which acts as the Charge relay system. Asparagine 408 is a glycosylation site (N-linked (GlcNAc...) asparagine).

Belongs to the AB hydrolase superfamily. Lipase family. As to expression, detected in blood plasma (at protein level).

It localises to the secreted. The enzyme catalyses a sterol + a 1,2-diacyl-sn-glycero-3-phosphocholine = a sterol ester + a 1-acyl-sn-glycero-3-phosphocholine. It carries out the reaction a 1-O-alkyl-2-acetyl-sn-glycero-3-phosphocholine + H2O = a 1-O-alkyl-sn-glycero-3-phosphocholine + acetate + H(+). The catalysed reaction is 1-hexadecanoyl-2-(9Z,12Z-octadecadienoyl)-sn-glycero-3-phosphocholine + H2O = (9Z,12Z)-octadecadienoate + 1-hexadecanoyl-sn-glycero-3-phosphocholine + H(+). It catalyses the reaction 1-hexadecanoyl-2-(5Z,8Z,11Z,14Z-eicosatetraenoyl)-sn-glycero-3-phosphocholine + H2O = 1-hexadecanoyl-sn-glycero-3-phosphocholine + (5Z,8Z,11Z,14Z)-eicosatetraenoate + H(+). The enzyme catalyses 1-hexadecanoyl-2-(5Z,8Z,11Z,14Z-eicosatetraenoyl)-sn-glycero-3-phosphocholine + cholesterol = cholesteryl (5Z,8Z,11Z,14Z)-eicosatetraenoate + 1-hexadecanoyl-sn-glycero-3-phosphocholine. It carries out the reaction 1-hexadecanoyl-2-(9Z-octadecenoyl)-sn-glycero-3-phosphocholine + cholesterol = cholesteryl (9Z-octadecenoate) + 1-hexadecanoyl-sn-glycero-3-phosphocholine. The catalysed reaction is a 1-hexadecanoyl-2-acyl-sn-glycero-3-phosphocholine + (24S)-hydroxycholesterol = (24S)-24-hydroxycholesterol ester + 1-hexadecanoyl-sn-glycero-3-phosphocholine. It catalyses the reaction (24S)-hydroxycholesterol + 1-hexadecanoyl-2-(9Z,12Z-octadecadienoyl)-sn-glycero-3-phosphocholine = (24S)-hydroxycholesterol 3-linoleoate + 1-hexadecanoyl-sn-glycero-3-phosphocholine. The enzyme catalyses 1-hexadecanoyl-2-(8Z,11Z,14Z-eicosatrienoyl)-sn-glycero-3-phosphocholine + cholesterol = cholesteryl (8Z,11Z,14Z)-eicosatrienoate + 1-hexadecanoyl-sn-glycero-3-phosphocholine. It carries out the reaction 1-hexadecanoyl-2-(5Z,8Z,11Z-eicosatrienoyl)-sn-glycero-3-phosphocholine + cholesterol = cholesteryl (5Z,8Z,11Z)-eicosatrienoate + 1-hexadecanoyl-sn-glycero-3-phosphocholine. The catalysed reaction is 1-hexadecanoyl-2-(5Z,8Z,11Z,14Z,17Z-eicosapentaenoyl)-sn-glycero-3-phosphocholine + cholesterol = (5Z,8Z,11Z,14Z,17Z-eicosapentaenoyl)-cholesterol + 1-hexadecanoyl-sn-glycero-3-phosphocholine. It catalyses the reaction 1-hexadecanoyl-2-(9Z,12Z-octadecadienoyl)-sn-glycero-3-phosphocholine + cholesterol = cholesteryl (9Z,12Z)-octadecadienoate + 1-hexadecanoyl-sn-glycero-3-phosphocholine. The enzyme catalyses 1-hexadecanoyl-2-(6Z,9Z,12Z-octadecatrienoyl)-sn-glycero-3-phosphocholine + cholesterol = (6Z,9Z,12Z-octadecatrienoyl)-cholesterol + 1-hexadecanoyl-sn-glycero-3-phosphocholine. It carries out the reaction 1-hexadecanoyl-2-(11Z,14Z,17Z-eicosatrienoyl)-sn-glycero-3-phosphocholine + cholesterol = (11Z,14Z,17Z-eicosatrienoyl)-cholesterol + 1-hexadecanoyl-sn-glycero-3-phosphocholine. The catalysed reaction is 1-hexadecanoyl-2-(9Z,12Z,15Z-octadecatrienoyl)-sn-glycero-3-phosphocholine + cholesterol = (9Z,12Z,15Z-octadecatrienoyl)-cholesterol + 1-hexadecanoyl-sn-glycero-3-phosphocholine. It catalyses the reaction a 1-O-alkyl-2-acetyl-sn-glycero-3-phosphocholine + 1-hexadecanoyl-sn-glycero-3-phosphocholine = 1-hexadecanoyl-2-acetyl-sn-glycero-3-phosphocholine + a 1-O-alkyl-sn-glycero-3-phosphocholine. Its function is as follows. Central enzyme in the extracellular metabolism of plasma lipoproteins. Synthesized mainly in the liver and secreted into plasma where it converts cholesterol and phosphatidylcholines (lecithins) to cholesteryl esters and lysophosphatidylcholines on the surface of high and low density lipoproteins (HDLs and LDLs). The cholesterol ester is then transported back to the liver. Also produced in the brain by primary astrocytes, and esterifies free cholesterol on nascent APOE-containing lipoproteins secreted from glia and influences cerebral spinal fluid (CSF) APOE- and APOA1 levels. Together with APOE and the cholesterol transporter ABCA1, plays a key role in the maturation of glial-derived, nascent lipoproteins. Required for remodeling high-density lipoprotein particles into their spherical forms. Has a preference for plasma 16:0-18:2 or 18:O-18:2 phosphatidylcholines. Catalyzes the hydrolysis of 1-O-alkyl-2-acetyl-sn-glycero-3-phosphocholine (platelet-activating factor or PAF) to 1-O-alkyl-sn-glycero-3-phosphocholine (lyso-PAF). Also catalyzes the transfer of the acetate group from PAF to 1-hexadecanoyl-sn-glycero-3-phosphocholine forming lyso-PAF. Catalyzes the esterification of (24S)-hydroxycholesterol (24(S)OH-C), also known as cerebrosterol to produce 24(S)OH-C monoesters. In Rattus norvegicus (Rat), this protein is Phosphatidylcholine-sterol acyltransferase (Lcat).